The chain runs to 258 residues: Large ribosomal subunit protein uL2x (258 aa).

Residues 211 to 231 (HGGGNHQHIGHASTVRRDAPP) form a disordered region.

The protein belongs to the universal ribosomal protein uL2 family.

The sequence is that of Large ribosomal subunit protein uL2x (RPL8C) from Arabidopsis thaliana (Mouse-ear cress).